Here is a 205-residue protein sequence, read N- to C-terminus: Probable GTP-binding protein EngB (205 aa).

An EngB-type G domain is found at Gln-27–Gly-201. GTP-binding positions include Gly-35–Ser-42, Gly-62–Leu-66, Asp-80–Gly-83, Thr-147–Asp-150, and Phe-180–Ser-182. The Mg(2+) site is built by Ser-42 and Thr-64.

It belongs to the TRAFAC class TrmE-Era-EngA-EngB-Septin-like GTPase superfamily. EngB GTPase family. Requires Mg(2+) as cofactor.

Necessary for normal cell division and for the maintenance of normal septation. This is Probable GTP-binding protein EngB from Hamiltonella defensa subsp. Acyrthosiphon pisum (strain 5AT).